A 220-amino-acid polypeptide reads, in one-letter code: UPF0711 protein C18orf21 (220 aa).

The tract at residues 117–181 (SRSFVSTLKS…VSTCSSKNTS (65 aa)) is disordered. Polar residues predominate over residues 119-136 (SFVSTLKSNPATPTSKLS). At Ser-126 the chain carries Phosphoserine. Phosphothreonine is present on residues Thr-130 and Thr-139. Residues 171 to 180 (SVSTCSSKNT) are compositionally biased toward low complexity.

It belongs to the UPF0711 family.

The chain is UPF0711 protein C18orf21 (C18orf21) from Homo sapiens (Human).